The following is a 259-amino-acid chain: Sorbitol-6-phosphate 2-dehydrogenase (259 aa).

4–33 (VAVVIGGGQTLGAFLCHGLAAEGYRVAVVD) lines the NAD(+) pocket. Serine 141 contributes to the substrate binding site. Tyrosine 154 serves as the catalytic Proton acceptor.

The protein belongs to the short-chain dehydrogenases/reductases (SDR) family. In terms of assembly, homotetramer.

The catalysed reaction is D-sorbitol 6-phosphate + NAD(+) = beta-D-fructose 6-phosphate + NADH + H(+). Its pathway is carbohydrate metabolism; D-sorbitol degradation; D-fructose 6-phosphate from D-sorbitol 6-phosphate: step 1/1. The chain is Sorbitol-6-phosphate 2-dehydrogenase (srlD) from Escherichia coli (strain K12).